The primary structure comprises 549 residues: Glucose-6-phosphate isomerase (549 aa).

E355 acts as the Proton donor in catalysis. Active-site residues include H387 and K515.

It belongs to the GPI family.

It localises to the cytoplasm. It carries out the reaction alpha-D-glucose 6-phosphate = beta-D-fructose 6-phosphate. It participates in carbohydrate biosynthesis; gluconeogenesis. The protein operates within carbohydrate degradation; glycolysis; D-glyceraldehyde 3-phosphate and glycerone phosphate from D-glucose: step 2/4. Functionally, catalyzes the reversible isomerization of glucose-6-phosphate to fructose-6-phosphate. The polypeptide is Glucose-6-phosphate isomerase (Mannheimia succiniciproducens (strain KCTC 0769BP / MBEL55E)).